The primary structure comprises 351 residues: Rhodopsin (351 aa).

Residues 1 to 36 are Extracellular-facing; it reads MNGTEGPFFYIPMSNATGLVRSPYDYPQYYLVPPWG. N-linked (GlcNAc...) asparagine glycosylation is found at Asn2 and Asn15. A helical transmembrane segment spans residues 37 to 61; that stretch reads YACLAAYMFLLILTGFPVNFLTLYV. The Cytoplasmic segment spans residues 62-73; the sequence is TIEHKKLRSPLN. The helical transmembrane segment at 74–96 threads the bilayer; the sequence is YILLNLAVADLFMVIGGFTTTMW. Over 97–110 the chain is Extracellular; that stretch reads TSLNGYFVFGRMGC. A disulfide bond links Cys110 and Cys187. Residues 111–133 traverse the membrane as a helical segment; sequence NIEGFFATLGGEIALWSLVVLSM. A 'Ionic lock' involved in activated form stabilization motif is present at residues 134–136; that stretch reads ERW. Over 134-152 the chain is Cytoplasmic; that stretch reads ERWIVVCKPISNFRFGENH. A helical membrane pass occupies residues 153-173; that stretch reads AVMGVAFSWFMAAACAVPPLV. Residues 174 to 202 lie on the Extracellular side of the membrane; it reads GWSRYIPEGMQCSCGIDYYTRAEGFNNES. Asn200 carries an N-linked (GlcNAc...) asparagine glycan. Residues 203–224 form a helical membrane-spanning segment; that stretch reads FVIYMFVVHFTCPLTIITFCYG. Residues 225–252 are Cytoplasmic-facing; that stretch reads RLVCTVKEAAAQQQESETTQRAEREVTR. Residues 253 to 274 traverse the membrane as a helical segment; the sequence is MVIIMFVAFLACWVPYASVAWY. The Extracellular portion of the chain corresponds to 275–286; that stretch reads IFTHQGSEFGPV. The helical transmembrane segment at 287-308 threads the bilayer; the sequence is FMTIPAFFAKSSAVYNPVIYIC. Lys296 is subject to N6-(retinylidene)lysine. Residues 309–351 are Cytoplasmic-facing; that stretch reads LNKQFRHCMITTLCCGKNPFEEEEGSTTASKTEASSVCSVSPA. 2 S-palmitoyl cysteine lipidation sites follow: Cys322 and Cys323. The interval 330–351 is disordered; sequence EEEGSTTASKTEASSVCSVSPA. The segment covering 334 to 351 has biased composition (polar residues); the sequence is STTASKTEASSVCSVSPA.

This sequence belongs to the G-protein coupled receptor 1 family. Opsin subfamily. In terms of processing, phosphorylated on some or all of the serine and threonine residues present in the C-terminal region. Contains one covalently linked retinal chromophore.

The protein localises to the membrane. The protein resides in the cell projection. It is found in the cilium. Its subcellular location is the photoreceptor outer segment. Photoreceptor required for image-forming vision at low light intensity. While most salt water fish species use retinal as chromophore, most freshwater fish use 3-dehydroretinal, or a mixture of retinal and 3-dehydroretinal. Light-induced isomerization of 11-cis to all-trans retinal triggers a conformational change that activates signaling via G-proteins. Subsequent receptor phosphorylation mediates displacement of the bound G-protein alpha subunit by arrestin and terminates signaling. This is Rhodopsin (rho) from Sardina pilchardus (European pilchard).